Here is a 261-residue protein sequence, read N- to C-terminus: Epidermal growth factor-binding protein type B (261 aa).

The signal sequence occupies residues 1 to 16 (MWFLILFLALSLGGID). Residues 17–24 (AAPPLQSR) constitute a propeptide, activation peptide. Positions 25 to 258 (VVGGFNCKKN…FNSWIKDTMM (234 aa)) constitute a Peptidase S1 domain. 5 disulfide bridges follow: Cys31–Cys173, Cys50–Cys66, Cys152–Cys219, Cys184–Cys198, and Cys209–Cys234. Residue His65 is the Charge relay system of the active site. The N-linked (GlcNAc...) asparagine glycan is linked to Asn102. Asp120 acts as the Charge relay system in catalysis. The Charge relay system role is filled by Ser213.

The protein belongs to the peptidase S1 family. Kallikrein subfamily.

The enzyme catalyses Hydrolyzes mouse Ren2 protein (a species of prorenin present in the submandibular gland) on the carboxy side of the arginine residue at the Lys-Arg-|- pair in the N-terminus, to yield mature renin.. Its function is as follows. Cleaves REN2 at a dibasic site to yield mature renin. In Mus musculus (Mouse), this protein is Epidermal growth factor-binding protein type B (Egfbp2).